A 68-amino-acid chain; its full sequence is MTFPKISDVTNLDSSSLAEEILVIKRELFDLRLKRATRQDFQPHLFKHSKHRLAQLLTVEKSRTKSTM.

It belongs to the universal ribosomal protein uL29 family.

The protein localises to the plastid. The protein resides in the chloroplast. This chain is Large ribosomal subunit protein uL29c, found in Pyropia yezoensis (Susabi-nori).